Here is a 301-residue protein sequence, read N- to C-terminus: UDP-N-acetylenolpyruvoylglucosamine reductase 1 (301 aa).

The FAD-binding PCMH-type domain occupies 29–196 (KIGGPADILI…LEAEFQLQIG (168 aa)). Residue R174 is part of the active site. The Proton donor role is filled by S225. The active site involves E295.

This sequence belongs to the MurB family. FAD serves as cofactor.

It localises to the cytoplasm. The catalysed reaction is UDP-N-acetyl-alpha-D-muramate + NADP(+) = UDP-N-acetyl-3-O-(1-carboxyvinyl)-alpha-D-glucosamine + NADPH + H(+). It functions in the pathway cell wall biogenesis; peptidoglycan biosynthesis. In terms of biological role, cell wall formation. The chain is UDP-N-acetylenolpyruvoylglucosamine reductase 1 (murB1) from Bacillus anthracis.